A 265-amino-acid polypeptide reads, in one-letter code: UPF0354 protein BH3252 (265 aa).

It belongs to the UPF0354 family.

This Halalkalibacterium halodurans (strain ATCC BAA-125 / DSM 18197 / FERM 7344 / JCM 9153 / C-125) (Bacillus halodurans) protein is UPF0354 protein BH3252.